We begin with the raw amino-acid sequence, 399 residues long: S-adenosylmethionine synthase (399 aa).

His-15 lines the ATP pocket. Asp-17 serves as a coordination point for Mg(2+). Position 43 (Glu-43) interacts with K(+). L-methionine-binding residues include Glu-56 and Gln-99. The segment at 99-109 (QSADIAQGVDN) is flexible loop. ATP is bound by residues 174–176 (DGK), 244–245 (RF), Asp-253, 259–260 (RK), Ala-276, and Lys-280. Asp-253 lines the L-methionine pocket. Residue Lys-284 participates in L-methionine binding.

The protein belongs to the AdoMet synthase family. Homotetramer; dimer of dimers. The cofactor is Mg(2+). It depends on K(+) as a cofactor.

Its subcellular location is the cytoplasm. The enzyme catalyses L-methionine + ATP + H2O = S-adenosyl-L-methionine + phosphate + diphosphate. It participates in amino-acid biosynthesis; S-adenosyl-L-methionine biosynthesis; S-adenosyl-L-methionine from L-methionine: step 1/1. Functionally, catalyzes the formation of S-adenosylmethionine (AdoMet) from methionine and ATP. The overall synthetic reaction is composed of two sequential steps, AdoMet formation and the subsequent tripolyphosphate hydrolysis which occurs prior to release of AdoMet from the enzyme. The protein is S-adenosylmethionine synthase of Salinispora tropica (strain ATCC BAA-916 / DSM 44818 / JCM 13857 / NBRC 105044 / CNB-440).